Consider the following 213-residue polypeptide: Orotate phosphoribosyltransferase (213 aa).

Residue lysine 26 participates in 5-phospho-alpha-D-ribose 1-diphosphate binding. An orotate-binding site is contributed by phenylalanine 34–phenylalanine 35. 5-phospho-alpha-D-ribose 1-diphosphate contacts are provided by residues tyrosine 72 to lysine 73, arginine 99, lysine 100, lysine 103, histidine 105, and aspartate 124 to alanine 132. Orotate is bound by residues threonine 128 and arginine 156.

It belongs to the purine/pyrimidine phosphoribosyltransferase family. PyrE subfamily. As to quaternary structure, homodimer. Mg(2+) is required as a cofactor.

It catalyses the reaction orotidine 5'-phosphate + diphosphate = orotate + 5-phospho-alpha-D-ribose 1-diphosphate. It participates in pyrimidine metabolism; UMP biosynthesis via de novo pathway; UMP from orotate: step 1/2. Catalyzes the transfer of a ribosyl phosphate group from 5-phosphoribose 1-diphosphate to orotate, leading to the formation of orotidine monophosphate (OMP). The chain is Orotate phosphoribosyltransferase from Salmonella paratyphi A (strain ATCC 9150 / SARB42).